Reading from the N-terminus, the 180-residue chain is D-lyxose ketol-isomerase (180 aa).

Residue Lys-62 participates in D-fructose binding. The Mn(2+) site is built by His-75 and His-77. Lys-86 serves as a coordination point for D-fructose. Mn(2+) contacts are provided by Glu-88 and His-143. The D-fructose site is built by Glu-156, Asp-166, and Arg-175.

It belongs to the D-lyxose ketol-isomerase family. In terms of assembly, homodimer; disulfide-linked. Stabilized by a disulfide bond between the two monomers of the dimeric enzyme and increased hydrophobicity at the dimer interface. It depends on Mn(2+) as a cofactor.

It catalyses the reaction D-lyxose = D-xylulose. Sugar isomerase that catalyzes the reversible isomerization of D-lyxose to D-xylulose. Is highly specific for the substrate D-lyxose, showing less than 2% activity towards mannose and other substrates reported for lyxose isomerases. This chain is D-lyxose ketol-isomerase, found in Thermofilum sp. (strain ex4484_79).